The following is a 423-amino-acid chain: Pseudouridylate synthase 1 homolog (423 aa).

The tract at residues 32–75 (AGNKVPPALASHQPDRKGRGGWVWEETEHPAKRVKGGEDEEPPR) is disordered. Residues 57 to 68 (ETEHPAKRVKGG) show a composition bias toward basic and acidic residues. Aspartate 142 acts as the Nucleophile in catalysis. Residues 403-423 (ADTGAKVPSSLEGSEGDGDTD) form a disordered region. Residues serine 411 and serine 416 each carry the phosphoserine modification. Position 422 is a phosphothreonine (threonine 422).

The protein belongs to the tRNA pseudouridine synthase TruA family. Monomer. Forms a complex with RARG and the SRA1 RNA in the nucleus.

It is found in the nucleus. The protein localises to the cytoplasm. It localises to the mitochondrion. It catalyses the reaction a uridine in tRNA = a pseudouridine in tRNA. The catalysed reaction is uridine(38/39/40) in tRNA = pseudouridine(38/39/40) in tRNA. The enzyme catalyses a uridine in mRNA = a pseudouridine in mRNA. Functionally, pseudouridylate synthase that catalyzes pseudouridylation of tRNAs and mRNAs. Acts on positions 27/28 in the anticodon stem and also positions 34 and 36 in the anticodon of an intron containing tRNA. Also catalyzes pseudouridylation of mRNAs: mediates pseudouridylation of mRNAs with the consensus sequence 5'-UGUAG-3'. Acts as a regulator of pre-mRNA splicing by mediating pseudouridylation of pre-mRNAs at locations associated with alternatively spliced regions. Pseudouridylation of pre-mRNAs near splice sites directly regulates mRNA splicing and mRNA 3'-end processing. Involved in regulation of nuclear receptor activity through pseudouridylation of SRA1 mRNA. In terms of biological role, does not form pseudouridine when expressed in vitro. The protein is Pseudouridylate synthase 1 homolog of Mus musculus (Mouse).